A 258-amino-acid polypeptide reads, in one-letter code: Transmembrane O-methyltransferase homolog (258 aa).

S-adenosyl-L-methionine-binding positions include Glu104, 106-107 (GT), Ser112, Glu130, and Ser160.

This sequence belongs to the class I-like SAM-binding methyltransferase superfamily. Cation-dependent O-methyltransferase family. As to quaternary structure, interacts with LHFPL5, PCDH15, TMC1, TMC2 and TMIE. Interacts directly with TMC1. The interaction of TOMT with TMC1 and TMC2 is required for the transportation of TMC1/2 into the stereocilia of hair cells.

The protein resides in the cytoplasm. It is found in the endoplasmic reticulum. The catalysed reaction is a catechol + S-adenosyl-L-methionine = a guaiacol + S-adenosyl-L-homocysteine + H(+). Its function is as follows. Catalyzes the O-methylation, and thereby the inactivation, of catecholamine neurotransmitters and catechol hormones. Required for auditory function. Component of the cochlear hair cell's mechanotransduction (MET) machinery. Involved in the assembly of the asymmetric tip-link MET complex. Required for transportation of TMC1 and TMC2 proteins into the mechanically sensitive stereocilia of the hair cells. The function in MET is independent of the enzymatic activity. The protein is Transmembrane O-methyltransferase homolog of Rattus norvegicus (Rat).